We begin with the raw amino-acid sequence, 97 residues long: MQFTALVAALLSVAAVQAQRNPITITPQFDCGATNSQQYVARSGDTLTKIAQEIYHDVVGVCDIARANNLADPNRIDAGTPYTIPINCQTYDRNSCL.

The signal sequence occupies residues 1-18; that stretch reads MQFTALVAALLSVAAVQA. The region spanning 37–84 is the LysM domain; the sequence is QQYVARSGDTLTKIAQEIYHDVVGVCDIARANNLADPNRIDAGTPYTI. Residues Gly44, Thr48, Asn74, and Ile76 each coordinate chitin.

Belongs to the secreted LysM effector family. As to quaternary structure, forms homodimers in a chitin-independent manner through interactions at the N-termini of Mg1LysM monomers. Homodimers are further polymerized in a chitin-dependent manner.

The protein resides in the secreted. The protein localises to the cell wall. In terms of biological role, secreted effector that enables the plant pathogenic fungus to manipulate host defenses for successful infection. Binds chitin but not cellulose or xylan. Chitin-induced polymerization of homodimers forms a contiguous Mg1LysM highly oligomeric super-complexe that is anchored to the chitin in the fungal cell wall to prevent hydrolysis by host chitinases. In Zymoseptoria tritici (strain ST99CH_3D7), this protein is Secreted LysM effector Mg1LysM.